Reading from the N-terminus, the 438-residue chain is Cyclic 2,3-diphosphoglycerate synthetase (438 aa).

The protein belongs to the cyclic 2,3-diphosphoglycerate synthetase family.

The protein localises to the cytoplasm. The catalysed reaction is (2R)-2,3-bisphosphoglycerate + ATP + H(+) = cyclic (2R)-2,3-bisphosphoglycerate + ADP + phosphate. Catalyzes the formation of cyclic 2,3-diphosphoglycerate (cDPG) by formation of an intramolecular phosphoanhydride bond at the expense of ATP. The sequence is that of Cyclic 2,3-diphosphoglycerate synthetase from Thermococcus gammatolerans (strain DSM 15229 / JCM 11827 / EJ3).